The sequence spans 280 residues: Ribonuclease Z (280 aa).

Zn(2+) contacts are provided by His-61, His-63, Asp-65, His-66, His-153, Asp-176, and His-240. The active-site Proton acceptor is the Asp-65.

It belongs to the RNase Z family. Homodimer. It depends on Zn(2+) as a cofactor.

It catalyses the reaction Endonucleolytic cleavage of RNA, removing extra 3' nucleotides from tRNA precursor, generating 3' termini of tRNAs. A 3'-hydroxy group is left at the tRNA terminus and a 5'-phosphoryl group is left at the trailer molecule.. Functionally, zinc phosphodiesterase, which displays some tRNA 3'-processing endonuclease activity. Probably involved in tRNA maturation, by removing a 3'-trailer from precursor tRNA. The polypeptide is Ribonuclease Z (Mycolicibacterium paratuberculosis (strain ATCC BAA-968 / K-10) (Mycobacterium paratuberculosis)).